We begin with the raw amino-acid sequence, 458 residues long: MILMPMASVVAVAEPKWVSVWGRFLWMTLLSMALGSLLALLLPLGAVEEQCLAVLRGFHLLRSKLDRAQHVVTKCTSPSTELSVTSRDAGLLTVKTKASPAGKLEAKAALNQALEMKRQGKRGKAHKLFLHALKMDPGFVDALNELGIFSEEDKDIIQADYLYTRALTISPFHEKALINRDRTLPLVEEIDQRYFSVLDSKVRKVMSIPKGSSALRRVMEETYYHHIYHTVAIEGNTLTLAEIRHILETRYAVPGKSLEEQNEVIGMHAAMKYINSTLVSRIGSVTIDHMLEIHRRVLGYVDPVEAGRFRRTQVLVGHHIPPHPRDVEKQMQEFTQWLNSEDAMNLHPVEFAALAHYKLVYIHPFIDGNGRTSRLLMNLILMQAGYPPITIRKEQRSEYYHVLEVANEGDVRPFIRFIAKCTEVTLDTLLLATTEYSAALPEAQPNHSGFKETLPVRP.

At 1–23 (MILMPMASVVAVAEPKWVSVWGR) the chain is on the cytoplasmic side. A helical; Signal-anchor for type II membrane protein transmembrane segment spans residues 24–44 (FLWMTLLSMALGSLLALLLPL). Topologically, residues 45-458 (GAVEEQCLAV…GFKETLPVRP (414 aa)) are lumenal. An O-AMP-serine; by autocatalysis modification is found at serine 79. The residue at position 80 (threonine 80) is an O-AMP-threonine; by autocatalysis. TPR repeat units follow at residues 106-139 (AKAA…DPGF) and 140-173 (VDAL…SPFH). Threonine 183 carries the O-AMP-threonine; by autocatalysis modification. The short motif at 230-235 (TVAIEG) is the Inhibitory (S/T)XXXE(G/N) motif element. Residue glutamate 234 participates in ATP binding. A glycan (N-linked (GlcNAc...) asparagine) is linked at asparagine 275. In terms of domain architecture, Fido spans 285 to 420 (VTIDHMLEIH…VRPFIRFIAK (136 aa)). 316–319 (VGHH) provides a ligand contact to ATP. Histidine 363 is an active-site residue. ATP contacts are provided by residues 367–374 (DGNGRTSR), 399–400 (YY), and asparagine 407.

The protein belongs to the fic family. As to quaternary structure, homodimer. Interacts with HD. Mg(2+) is required as a cofactor. Requires Mn(2+) as cofactor. In terms of processing, auto-AMPylated in vitro.

It is found in the endoplasmic reticulum membrane. The catalysed reaction is L-tyrosyl-[protein] + ATP = O-(5'-adenylyl)-L-tyrosyl-[protein] + diphosphate. It carries out the reaction 3-O-(5'-adenylyl)-L-threonyl-[protein] + H2O = L-threonyl-[protein] + AMP + H(+). The enzyme catalyses L-threonyl-[protein] + ATP = 3-O-(5'-adenylyl)-L-threonyl-[protein] + diphosphate. Its activity is regulated as follows. The side chain of Glu-234 determines which of the two opposing activities (AMPylase or de-AMPylase) will take place. In response to endoplasmic reticulum stress, mediates de-AMPylase activity. Adenylyltransferase activity is inhibited by the inhibitory helix present at the N-terminus: Glu-234 binds ATP and competes with ATP-binding at Arg-374, thereby preventing adenylyltransferase activity. In unstressed cells, disengagement of Glu-234 promotes adenylyltransferase activity. Activation dissociates ATP-binding from Glu-234, allowing ordered binding of the entire ATP moiety with the alpha-phosphate in an orientation that is productive for accepting an incoming target hydroxyl side chain. Its function is as follows. Protein that can both mediate the addition of adenosine 5'-monophosphate (AMP) to specific residues of target proteins (AMPylation), and the removal of the same modification from target proteins (de-AMPylation), depending on the context. The side chain of Glu-231 determines which of the two opposing activities (AMPylase or de-AMPylase) will take place. Acts as a key regulator of the ERN1/IRE1-mediated unfolded protein response (UPR) by mediating AMPylation or de-AMPylation of HSPA5/BiP. In unstressed cells, acts as an adenylyltransferase by mediating AMPylation of HSPA5/BiP at 'Thr-518', thereby inactivating it. In response to endoplasmic reticulum stress, acts as a phosphodiesterase by mediating removal of ATP (de-AMPylation) from HSPA5/BiP at 'Thr-518', leading to restore HSPA5/BiP activity. Although it is able to AMPylate RhoA, Rac and Cdc42 Rho GTPases in vitro, Rho GTPases do not constitute physiological substrates. The polypeptide is Protein adenylyltransferase FICD (Rattus norvegicus (Rat)).